The following is a 464-amino-acid chain: Glutamate--tRNA ligase (464 aa).

The short motif at 9–19 (PSPTGYLHIGG) is the 'HIGH' region element. The 'KMSKS' region signature appears at 242 to 246 (KISKR). Lys-245 is an ATP binding site.

It belongs to the class-I aminoacyl-tRNA synthetase family. Glutamate--tRNA ligase type 1 subfamily. In terms of assembly, monomer.

It is found in the cytoplasm. It carries out the reaction tRNA(Glu) + L-glutamate + ATP = L-glutamyl-tRNA(Glu) + AMP + diphosphate. In terms of biological role, catalyzes the attachment of glutamate to tRNA(Glu) in a two-step reaction: glutamate is first activated by ATP to form Glu-AMP and then transferred to the acceptor end of tRNA(Glu). The chain is Glutamate--tRNA ligase from Neisseria meningitidis serogroup A / serotype 4A (strain DSM 15465 / Z2491).